The primary structure comprises 37 residues: Photosystem II reaction center protein Psb30 (37 aa).

Residues leucine 10–tryptophan 30 traverse the membrane as a helical segment.

It belongs to the Psb30/Ycf12 family. PSII is composed of 1 copy each of membrane proteins PsbA, PsbB, PsbC, PsbD, PsbE, PsbF, PsbH, PsbI, PsbJ, PsbK, PsbL, PsbM, PsbT, PsbX, Psb30/Ycf12, peripheral proteins PsbO, CyanoQ (PsbQ), PsbU, PsbV and a large number of cofactors. It forms dimeric complexes.

The protein localises to the cell inner membrane. Functionally, a core subunit of photosystem II (PSII), probably helps stabilize the reaction center. This chain is Photosystem II reaction center protein Psb30, found in Gloeobacter violaceus (strain ATCC 29082 / PCC 7421).